Here is a 284-residue protein sequence, read N- to C-terminus: Protein phosphatase 1 regulatory subunit 3B (284 aa).

A PP1-binding motif motif is present at residues 61 to 64; it reads RVSF. Positions 124 to 232 constitute a CBM21 domain; it reads RNRLQTNHVC…SNKGKNYRIT (109 aa). S260 is modified (phosphoserine).

Interacts with glycogen, PPP1CC catalytic subunit of PP1 and PYGL. Associates with glycogen particles. Forms complexes with debranching enzyme, glycogen phosphorylase, glycogen synthase and phosphorylase kinase which is necessary for its regulation of PP1 activity. As to expression, highly expressed in liver. Moderately expressed in kidney, heart, testis, spleen and lung. Weakly expressed in skeletal muscle (at protein level). Expressed predominantly in liver. Expressed moderately in heart. Expressed weakly in lung, kidney, spleen and skeletal muscle.

Acts as a glycogen-targeting subunit for phosphatase PP1. Facilitates interaction of the PP1 with enzymes of the glycogen metabolism and regulates its activity. Suppresses the rate at which PP1 dephosphorylates (inactivates) glycogen phosphorylase and enhances the rate at which it activates glycogen synthase and therefore limits glycogen breakdown. Its activity is inhibited by PYGL, resulting in inhibition of the glycogen synthase and glycogen phosphorylase phosphatase activities of PP1. Dramatically increases basal and insulin-stimulated glycogen synthesis upon overexpression in hepatocytes. This Rattus norvegicus (Rat) protein is Protein phosphatase 1 regulatory subunit 3B (Ppp1r3b).